Reading from the N-terminus, the 301-residue chain is Methionyl-tRNA formyltransferase (301 aa).

Position 110 to 113 (110 to 113 (SLLP)) interacts with (6S)-5,6,7,8-tetrahydrofolate.

It belongs to the Fmt family.

The enzyme catalyses L-methionyl-tRNA(fMet) + (6R)-10-formyltetrahydrofolate = N-formyl-L-methionyl-tRNA(fMet) + (6S)-5,6,7,8-tetrahydrofolate + H(+). Attaches a formyl group to the free amino group of methionyl-tRNA(fMet). The formyl group appears to play a dual role in the initiator identity of N-formylmethionyl-tRNA by promoting its recognition by IF2 and preventing the misappropriation of this tRNA by the elongation apparatus. In Acidiphilium cryptum (strain JF-5), this protein is Methionyl-tRNA formyltransferase.